A 239-amino-acid chain; its full sequence is Mediator of RNA polymerase II transcription subunit 4 (239 aa).

The disordered stretch occupies residues 168 to 221 (QLFSEQPPKTNEPTETETEIDANKAVEEKTKMNYPASPTFTTQEENKEVESPAN). Basic and acidic residues predominate over residues 188–198 (DANKAVEEKTK). Phosphoserine occurs at positions 204 and 218.

The protein belongs to the Mediator complex subunit 4 family. Component of the Mediator complex.

It is found in the nucleus. Component of the Mediator complex, a coactivator involved in the regulated transcription of nearly all RNA polymerase II-dependent genes. Mediator functions as a bridge to convey information from gene-specific regulatory proteins to the basal RNA polymerase II transcription machinery. Mediator is recruited to promoters by direct interactions with regulatory proteins and serves as a scaffold for the assembly of a functional preinitiation complex with RNA polymerase II and the general transcription factors. The chain is Mediator of RNA polymerase II transcription subunit 4 (med4) from Schizosaccharomyces pombe (strain 972 / ATCC 24843) (Fission yeast).